The chain runs to 177 residues: Large ribosomal subunit protein uL6 (177 aa).

It belongs to the universal ribosomal protein uL6 family. As to quaternary structure, part of the 50S ribosomal subunit.

Functionally, this protein binds to the 23S rRNA, and is important in its secondary structure. It is located near the subunit interface in the base of the L7/L12 stalk, and near the tRNA binding site of the peptidyltransferase center. The sequence is that of Large ribosomal subunit protein uL6 from Methanothermobacter thermautotrophicus (strain ATCC 29096 / DSM 1053 / JCM 10044 / NBRC 100330 / Delta H) (Methanobacterium thermoautotrophicum).